The primary structure comprises 345 residues: Sorting nexin-15 (345 aa).

The region spanning 1–130 (MSRQAKDDFL…EFFRGGEVTR (130 aa)) is the PX domain. Residue Arg105 is modified to Omega-N-methylarginine. The tract at residues 133-163 (EVSGDLHILPPPLIPTPPPDEPRVQPHETWL) is disordered. The span at 141-151 (LPPPLIPTPPP) shows a compositional bias: pro residues. Residues Ser208 and Ser234 each carry the phosphoserine modification. Residues 226–274 (SKEEGAGPSPTHIGELAALEAGSGRPDQEPWEPGGQAEEDDEEGEPAPA) form a disordered region. Residues 272 to 345 (APAYLSQATE…AEEILHLHLS (74 aa)) form the MIT domain.

This sequence belongs to the sorting nexin family.

Functionally, may be involved in several stages of intracellular trafficking. Overexpression of SNX15 disrupts the normal trafficking of proteins from the plasma membrane to recycling endosomes or the TGN. The polypeptide is Sorting nexin-15 (SNX15) (Bos taurus (Bovine)).